The chain runs to 90 residues: DNA-directed RNA polymerase subunit omega (90 aa).

It belongs to the RNA polymerase subunit omega family. As to quaternary structure, the RNAP catalytic core consists of 2 alpha, 1 beta, 1 beta' and 1 omega subunit. When a sigma factor is associated with the core the holoenzyme is formed, which can initiate transcription.

It carries out the reaction RNA(n) + a ribonucleoside 5'-triphosphate = RNA(n+1) + diphosphate. In terms of biological role, promotes RNA polymerase assembly. Latches the N- and C-terminal regions of the beta' subunit thereby facilitating its interaction with the beta and alpha subunits. The polypeptide is DNA-directed RNA polymerase subunit omega (Alteromonas mediterranea (strain DSM 17117 / CIP 110805 / LMG 28347 / Deep ecotype)).